The primary structure comprises 170 residues: Ribosome maturation factor RimM (170 aa).

In terms of domain architecture, PRC barrel spans 93–165 (PDEFHDHELI…RVVIDPPPGL (73 aa)).

The protein belongs to the RimM family. Binds ribosomal protein uS19.

The protein localises to the cytoplasm. An accessory protein needed during the final step in the assembly of 30S ribosomal subunit, possibly for assembly of the head region. Essential for efficient processing of 16S rRNA. May be needed both before and after RbfA during the maturation of 16S rRNA. It has affinity for free ribosomal 30S subunits but not for 70S ribosomes. This is Ribosome maturation factor RimM from Thermobifida fusca (strain YX).